The sequence spans 346 residues: MTGIVGYGAHIPSYRIKVEEIAKVWGDDPKSISKGLVVNQKSVPGPDEDTITISVEAARRALQRAEIDPQDIGAIYVGSESHPYAVKPTATIVADAIRASPNLTAADLEFACKAGTAGIQAAVGLVKSGMIKYGLAIGADTSQGAPGDALEYTASAGGAAYIIGEDNTIADIEHTCSFTTDTPDFYRREGQAYPSHGGRFTGQPAYFKHVLGAANRMLEETGTTAKDYDYAVFHQPNGKFYIRVARKLGFTEDQYKQGLLTPNIGNTYSGATPLGLASILDIAKPGDKIFAVSYGSGAGSDAFKITVNDRIEEVRNNAKTLEEIQSKITYVDYATYAKFKGKIKMN.

Residue aspartate 28 coordinates (3S)-3-hydroxy-3-methylglutaryl-CoA. Glutamate 80 functions as the Proton donor/acceptor in the catalytic mechanism. Residues cysteine 112 and threonine 153 each coordinate (3S)-3-hydroxy-3-methylglutaryl-CoA. Residue cysteine 112 is the Acyl-thioester intermediate of the active site. A CoA-binding site is contributed by arginine 199. Residues threonine 201 and histidine 234 each contribute to the (3S)-3-hydroxy-3-methylglutaryl-CoA site. Histidine 234 functions as the Proton donor/acceptor in the catalytic mechanism. Lysine 239 lines the CoA pocket. Residues arginine 243, asparagine 266, and serine 296 each coordinate (3S)-3-hydroxy-3-methylglutaryl-CoA.

This sequence belongs to the thiolase-like superfamily. Archaeal HMG-CoA synthase family. Interacts with acetoacetyl-CoA thiolase that catalyzes the precedent step in the pathway and with a DUF35 protein. The acetoacetyl-CoA thiolase/HMG-CoA synthase complex channels the intermediate via a fused CoA-binding site, which allows for efficient coupling of the endergonic thiolase reaction with the exergonic HMGCS reaction.

It catalyses the reaction acetoacetyl-CoA + acetyl-CoA + H2O = (3S)-3-hydroxy-3-methylglutaryl-CoA + CoA + H(+). It participates in metabolic intermediate biosynthesis; (R)-mevalonate biosynthesis; (R)-mevalonate from acetyl-CoA: step 2/3. Its function is as follows. Catalyzes the condensation of acetyl-CoA with acetoacetyl-CoA to form 3-hydroxy-3-methylglutaryl-CoA (HMG-CoA). Functions in the mevalonate (MVA) pathway leading to isopentenyl diphosphate (IPP), a key precursor for the biosynthesis of isoprenoid compounds that are building blocks of archaeal membrane lipids. This is Hydroxymethylglutaryl-CoA synthase from Methanosphaera stadtmanae (strain ATCC 43021 / DSM 3091 / JCM 11832 / MCB-3).